Consider the following 181-residue polypeptide: Alkyl hydroperoxide reductase AhpD (181 aa).

Cysteine 131 functions as the Proton donor in the catalytic mechanism. Cysteine 131 and cysteine 134 form a disulfide bridge. The active-site Cysteine sulfenic acid (-SOH) intermediate is the cysteine 134.

It belongs to the AhpD family.

The catalysed reaction is N(6)-[(R)-dihydrolipoyl]-L-lysyl-[lipoyl-carrier protein] + a hydroperoxide = N(6)-[(R)-lipoyl]-L-lysyl-[lipoyl-carrier protein] + an alcohol + H2O. In terms of biological role, antioxidant protein with alkyl hydroperoxidase activity. Required for the reduction of the AhpC active site cysteine residues and for the regeneration of the AhpC enzyme activity. The polypeptide is Alkyl hydroperoxide reductase AhpD (Azorhizobium caulinodans (strain ATCC 43989 / DSM 5975 / JCM 20966 / LMG 6465 / NBRC 14845 / NCIMB 13405 / ORS 571)).